The sequence spans 455 residues: Kynurenine 3-monooxygenase (455 aa).

This sequence belongs to the aromatic-ring hydroxylase family. KMO subfamily. Requires FAD as cofactor.

The enzyme catalyses L-kynurenine + NADPH + O2 + H(+) = 3-hydroxy-L-kynurenine + NADP(+) + H2O. The protein operates within cofactor biosynthesis; NAD(+) biosynthesis; quinolinate from L-kynurenine: step 1/3. In terms of biological role, catalyzes the hydroxylation of L-kynurenine (L-Kyn) to form 3-hydroxy-L-kynurenine (L-3OHKyn). Required for synthesis of quinolinic acid. This chain is Kynurenine 3-monooxygenase, found in Xanthomonas euvesicatoria pv. vesicatoria (strain 85-10) (Xanthomonas campestris pv. vesicatoria).